The following is a 1021-amino-acid chain: MSDNMQIDSPSPQEIDEGLYSRQLYVLGKEAMLKMQNANVLIIGLNGLGIEIAKNIALAGVKSLSLYDPKPVSITDLSTQFFLSESEIGQPRDVASREKLAELNSYVPINVVDNIDEETLLKFKCIVSTNISLEEQVKINNITHANNIGYINADIKGLFGQIFVDFGDKFTVIDQTGEEPLSGIVSDIEKNGTVTMLDDNRHGLQDGDYVKFAEVEGMPKLNEGNPHKVEVLGPYAFKIKIDESYGEYVKGGLYTQVKVPKDLSFEPLTKQLAAPEYLISDFAKFDKPAQLHLGFQALHAFQTKHQGELPAPYNEQDATEAFRYAEELATQNPSILGEDKLDEKYLKELFYQARGDIPGVVAFYGGLIAQEVLKNCSSKFTPIKQWLYFDSLESLPSETEYPRNEENNKPIGSRYDGQIAVFGKAFQEKIANLKVFLVGSGAIGCEMLKNWAMMGLGSGPEGKIFITDNDSIEKSNLNRQFLFRPKDVGKNKSDVAALAVQQMNPDLKGKIDSKLDKVGPETEDIFDDKFWTQLNIVVNALDNVEARTYVDRRCVFYKKPLLESGTLGTKGNTQVVIPNLTESYSSSQDPPEKSIPLCTLRSFPNKIDHTIAWAKSLFQGYFAESPESVNLYLSQPNYVEQTLKQNPDIKGTLENISKYLNNRPYTFEDCIKWARQEFETKFNHDIQQLLYNFPPDAKTSTGAPFWSGPKRAPKPLEFDINNKDHLDFIIGGANLLAFIYGLKEPNATVDDFKKVLEQVIIEPFQPKSGVEIAATDAEAEEQANNLSGSIDDEQIRKIAASLPEPSTLAGYRLTPIEFEKDDDTNHHIEFITAASNCRALNYGIEIADAHKTKFIAGKIIPAIATTTALVTGLVCLELYKVVDGKDDIEQYKNGFINLALPFIGFSEPIKSPEGKYNNKKFDQIWDRFELNGDITLQELLDHFEKEEGLTISMLSYGVSLLYASFFPPKKVKDRLGLKLTSLIKEVSKKEVPSHVKNLIFEICCDDEEGEDVEVPYICVKL.

ATP is bound by residues Arg-22, Ala-442, and Asp-468. Mg(2+) is bound at residue Asp-470. Residues Arg-479, Lys-492, Val-518, and 542–543 (DN) each bind ATP. Residue Asp-542 coordinates Mg(2+). Catalysis depends on Cys-598, which acts as the Glycyl thioester intermediate.

It belongs to the ubiquitin-activating E1 family. As to quaternary structure, monomer.

The protein localises to the cytoplasm. It localises to the nucleus. The enzyme catalyses ATP + ubiquitin + [E1 ubiquitin-activating enzyme]-L-cysteine = AMP + diphosphate + S-ubiquitinyl-[E1 ubiquitin-activating enzyme]-L-cysteine.. It participates in protein modification; protein ubiquitination. Its function is as follows. E1 ubiquitin-activating enzyme that catalyzes the first step in ubiquitin conjugation to mark cellular proteins for degradation through the ubiquitin-proteasome system. Activates ubiquitin by first adenylating its C-terminal glycine residue with ATP, and thereafter linking this residue to the side chain of a cysteine residue in E1, yielding a ubiquitin-E1 thioester and free AMP. The chain is Ubiquitin-activating enzyme E1 1 (UBA1) from Candida albicans (strain WO-1) (Yeast).